We begin with the raw amino-acid sequence, 87 residues long: Cell division topological specificity factor (87 aa).

It belongs to the MinE family.

Functionally, prevents the cell division inhibition by proteins MinC and MinD at internal division sites while permitting inhibition at polar sites. This ensures cell division at the proper site by restricting the formation of a division septum at the midpoint of the long axis of the cell. The chain is Cell division topological specificity factor from Aliivibrio fischeri (strain ATCC 700601 / ES114) (Vibrio fischeri).